The sequence spans 604 residues: Protein TAX4 (604 aa).

Disordered stretches follow at residues 38 to 77, 132 to 249, 267 to 299, 338 to 380, and 394 to 428; these read HPNGNAGSAERPRHLKVESAPVVKSEPSLPRMRQPEPRSI, SFSN…RQQE, GTLPDLIPRSQRKTSKPRFKHRLLRSPEQQQEN, DETF…KGLK, and PFPHHHHHHHQLHNPNSHHLHTHHHTSSHKFNEDK. Residues 176–185 show a composition bias toward polar residues; that stretch reads YDNNVRSRSI. 2 stretches are compositionally biased toward low complexity: residues 186-203 and 224-240; these read SPQVSYSTSLSSSCSISS and SMSSYSLASKASAKASL. Basic residues-rich tracts occupy residues 276–290, 366–379, and 396–421; these read SQRKTSKPRFKHRLL, KKKKSRRSKIKKGL, and PHHHHHHHQLHNPNSHHLHTHHHTSS. Positions 469 to 559 constitute an EH domain; it reads ANEDDESHLQ…RVWNSVDGYV (91 aa).

The protein belongs to the IRS4 family. In terms of assembly, interacts with INP51.

Functionally, with IRS4, acts as a positive regulator of INP51 activity and phosphatidylinositol 4,5-bisphosphate turnover. Negatively regulates signaling through the cell integrity pathway, including the MAP kinase SLT2. This is Protein TAX4 (TAX4) from Saccharomyces cerevisiae (strain ATCC 204508 / S288c) (Baker's yeast).